The chain runs to 278 residues: Putative phosphoenolpyruvate synthase regulatory protein (278 aa).

158 to 165 serves as a coordination point for ADP; sequence GVSRSGKT.

The protein belongs to the pyruvate, phosphate/water dikinase regulatory protein family. PSRP subfamily.

It carries out the reaction [pyruvate, water dikinase] + ADP = [pyruvate, water dikinase]-phosphate + AMP + H(+). The enzyme catalyses [pyruvate, water dikinase]-phosphate + phosphate + H(+) = [pyruvate, water dikinase] + diphosphate. Bifunctional serine/threonine kinase and phosphorylase involved in the regulation of the phosphoenolpyruvate synthase (PEPS) by catalyzing its phosphorylation/dephosphorylation. The polypeptide is Putative phosphoenolpyruvate synthase regulatory protein (Acinetobacter baumannii (strain AYE)).